Consider the following 389-residue polypeptide: Succinate--CoA ligase [ADP-forming] subunit beta (389 aa).

The 236-residue stretch at 9 to 244 (KQLLAEYGIP…KTQEDPTEVI (236 aa)) folds into the ATP-grasp domain. ATP contacts are provided by residues lysine 46, 53-55 (GRG), glycine 102, and glutamate 107. Mg(2+) contacts are provided by asparagine 199 and aspartate 213. Substrate-binding positions include asparagine 264 and 321–323 (GIV).

Belongs to the succinate/malate CoA ligase beta subunit family. As to quaternary structure, heterotetramer of two alpha and two beta subunits. The cofactor is Mg(2+).

It carries out the reaction succinate + ATP + CoA = succinyl-CoA + ADP + phosphate. It catalyses the reaction GTP + succinate + CoA = succinyl-CoA + GDP + phosphate. It functions in the pathway carbohydrate metabolism; tricarboxylic acid cycle; succinate from succinyl-CoA (ligase route): step 1/1. Functionally, succinyl-CoA synthetase functions in the citric acid cycle (TCA), coupling the hydrolysis of succinyl-CoA to the synthesis of either ATP or GTP and thus represents the only step of substrate-level phosphorylation in the TCA. The beta subunit provides nucleotide specificity of the enzyme and binds the substrate succinate, while the binding sites for coenzyme A and phosphate are found in the alpha subunit. The sequence is that of Succinate--CoA ligase [ADP-forming] subunit beta from Stenotrophomonas maltophilia (strain R551-3).